The chain runs to 268 residues: uncharacterized protein (268 aa).

This is an uncharacterized protein from Schizosaccharomyces pombe (strain 972 / ATCC 24843) (Fission yeast).